Reading from the N-terminus, the 176-residue chain is NAD(P)H-quinone oxidoreductase subunit 6, chloroplastic (176 aa).

5 helical membrane-spanning segments follow: residues 10–30, 32–52, 61–81, 95–115, and 152–172; these read FLLV…VLFP, PIFS…LYIL, AQLL…VMFM, VGDG…ISTI, and FFLP…GAIS.

This sequence belongs to the complex I subunit 6 family. As to quaternary structure, NDH is composed of at least 16 different subunits, 5 of which are encoded in the nucleus.

Its subcellular location is the plastid. The protein localises to the chloroplast thylakoid membrane. It carries out the reaction a plastoquinone + NADH + (n+1) H(+)(in) = a plastoquinol + NAD(+) + n H(+)(out). The enzyme catalyses a plastoquinone + NADPH + (n+1) H(+)(in) = a plastoquinol + NADP(+) + n H(+)(out). NDH shuttles electrons from NAD(P)H:plastoquinone, via FMN and iron-sulfur (Fe-S) centers, to quinones in the photosynthetic chain and possibly in a chloroplast respiratory chain. The immediate electron acceptor for the enzyme in this species is believed to be plastoquinone. Couples the redox reaction to proton translocation, and thus conserves the redox energy in a proton gradient. This Aethionema cordifolium (Lebanon stonecress) protein is NAD(P)H-quinone oxidoreductase subunit 6, chloroplastic (ndhG).